A 194-amino-acid polypeptide reads, in one-letter code: Insertion element IS136 uncharacterized 21.2 kDa protein (194 aa).

Positions 73–103 (SCDRACAPTPGRDPPVSSLPNSRQPARQNPR) are disordered. The segment covering 90 to 103 (SLPNSRQPARQNPR) has biased composition (polar residues).

The sequence is that of Insertion element IS136 uncharacterized 21.2 kDa protein from Agrobacterium tumefaciens (strain T37).